We begin with the raw amino-acid sequence, 149 residues long: Probable glycine-rich RNA-binding protein 1 (149 aa).

The RRM domain occupies Tyr8–Ala83. Positions Thr80–Asn149 are disordered. Composition is skewed to gly residues over residues Gly87–Tyr101, Tyr110–Gly123, and Tyr131–Glu143.

This sequence belongs to the GR-RBP family.

Its function is as follows. Possibly has a role in RNA transcription or processing during stress. The polypeptide is Probable glycine-rich RNA-binding protein 1 (RBG1) (Arabidopsis thaliana (Mouse-ear cress)).